Reading from the N-terminus, the 257-residue chain is Hydroxyethylthiazole kinase (257 aa).

Position 49 (methionine 49) interacts with substrate. Arginine 124 and threonine 170 together coordinate ATP. Glycine 197 lines the substrate pocket.

It belongs to the Thz kinase family. Mg(2+) is required as a cofactor.

The enzyme catalyses 5-(2-hydroxyethyl)-4-methylthiazole + ATP = 4-methyl-5-(2-phosphooxyethyl)-thiazole + ADP + H(+). It participates in cofactor biosynthesis; thiamine diphosphate biosynthesis; 4-methyl-5-(2-phosphoethyl)-thiazole from 5-(2-hydroxyethyl)-4-methylthiazole: step 1/1. Catalyzes the phosphorylation of the hydroxyl group of 4-methyl-5-beta-hydroxyethylthiazole (THZ). This chain is Hydroxyethylthiazole kinase, found in Klebsiella pneumoniae (strain 342).